The chain runs to 204 residues: Probable nicotinate-nucleotide adenylyltransferase (204 aa).

It belongs to the NadD family.

It catalyses the reaction nicotinate beta-D-ribonucleotide + ATP + H(+) = deamido-NAD(+) + diphosphate. It functions in the pathway cofactor biosynthesis; NAD(+) biosynthesis; deamido-NAD(+) from nicotinate D-ribonucleotide: step 1/1. In terms of biological role, catalyzes the reversible adenylation of nicotinate mononucleotide (NaMN) to nicotinic acid adenine dinucleotide (NaAD). The polypeptide is Probable nicotinate-nucleotide adenylyltransferase (Dehalococcoides mccartyi (strain CBDB1)).